We begin with the raw amino-acid sequence, 20 residues long: Dermaseptin-N1 (20 aa).

Leucine 20 is subject to Leucine amide.

Expressed by the skin glands.

It localises to the secreted. Functionally, antimicrobial peptide with moderate activity against both Gram-positive and Gram-negative bacteria, and important activity against Leishmania species (L.amazonensis and L.infantum). Acts on both Leishmania promastigote and amastigote forms. Shows activity against E.coli (MIC=17.8 uM), S.aureus (MIC=32.3 uM) and the phytopathogenic bacterium Xanthomonas axonopodis (MIC=2 uM). Shows low cytotoxicity against mammalian cells in models of peritoneal macrophages. This Pithecopus nordestinus (Northeastern Brazilian leaf frog) protein is Dermaseptin-N1.